The primary structure comprises 209 residues: Uracil phosphoribosyltransferase (209 aa).

Residues R79, R104, and 131-139 (DPMLATGGS) contribute to the 5-phospho-alpha-D-ribose 1-diphosphate site. Residues I194 and 199 to 201 (GDA) each bind uracil. A 5-phospho-alpha-D-ribose 1-diphosphate-binding site is contributed by D200.

This sequence belongs to the UPRTase family. The cofactor is Mg(2+).

The enzyme catalyses UMP + diphosphate = 5-phospho-alpha-D-ribose 1-diphosphate + uracil. It functions in the pathway pyrimidine metabolism; UMP biosynthesis via salvage pathway; UMP from uracil: step 1/1. Its activity is regulated as follows. Allosterically activated by GTP. Functionally, catalyzes the conversion of uracil and 5-phospho-alpha-D-ribose 1-diphosphate (PRPP) to UMP and diphosphate. This chain is Uracil phosphoribosyltransferase, found in Listeria monocytogenes serovar 1/2a (strain ATCC BAA-679 / EGD-e).